The chain runs to 521 residues: Lysine--tRNA ligase (521 aa).

The 'HIGH' region signature appears at 32 to 40; the sequence is PSGTVHIGN. A 'KMSKS' region motif is present at residues 280–284; it reads KISSS.

It belongs to the class-I aminoacyl-tRNA synthetase family.

The protein localises to the cytoplasm. It carries out the reaction tRNA(Lys) + L-lysine + ATP = L-lysyl-tRNA(Lys) + AMP + diphosphate. The sequence is that of Lysine--tRNA ligase (lysS) from Borreliella burgdorferi (strain ATCC 35210 / DSM 4680 / CIP 102532 / B31) (Borrelia burgdorferi).